A 445-amino-acid polypeptide reads, in one-letter code: Argininosuccinate synthase (445 aa).

ATP contacts are provided by residues 18 to 26 (AFSGGLDTS) and alanine 44. An L-citrulline-binding site is contributed by tyrosine 100. Positions 130 and 132 each coordinate ATP. 3 residues coordinate L-aspartate: threonine 132, asparagine 136, and aspartate 137. Asparagine 136 contacts L-citrulline. An ATP-binding site is contributed by aspartate 137. The L-citrulline site is built by arginine 140 and serine 193. Aspartate 195 contacts ATP. L-citrulline is bound by residues threonine 202, glutamate 204, and glutamate 281.

This sequence belongs to the argininosuccinate synthase family. Type 2 subfamily. Homotetramer.

Its subcellular location is the cytoplasm. It carries out the reaction L-citrulline + L-aspartate + ATP = 2-(N(omega)-L-arginino)succinate + AMP + diphosphate + H(+). Its pathway is amino-acid biosynthesis; L-arginine biosynthesis; L-arginine from L-ornithine and carbamoyl phosphate: step 2/3. The sequence is that of Argininosuccinate synthase (argG) from Pasteurella multocida (strain Pm70).